We begin with the raw amino-acid sequence, 700 residues long: Glycine--tRNA ligase beta subunit (700 aa).

It belongs to the class-II aminoacyl-tRNA synthetase family. As to quaternary structure, tetramer of two alpha and two beta subunits.

It localises to the cytoplasm. The enzyme catalyses tRNA(Gly) + glycine + ATP = glycyl-tRNA(Gly) + AMP + diphosphate. This is Glycine--tRNA ligase beta subunit from Magnetococcus marinus (strain ATCC BAA-1437 / JCM 17883 / MC-1).